The sequence spans 332 residues: Glycerol-3-phosphate dehydrogenase [NAD(P)+] (332 aa).

NADPH contacts are provided by W11, R30, and K108. Sn-glycerol 3-phosphate is bound by residues K108, G137, and S139. NADPH is bound at residue A141. Residues K192, D245, S255, R256, and N257 each coordinate sn-glycerol 3-phosphate. K192 acts as the Proton acceptor in catalysis. Residue R256 coordinates NADPH. Residues V280 and E282 each contribute to the NADPH site.

The protein belongs to the NAD-dependent glycerol-3-phosphate dehydrogenase family.

Its subcellular location is the cytoplasm. The catalysed reaction is sn-glycerol 3-phosphate + NAD(+) = dihydroxyacetone phosphate + NADH + H(+). It catalyses the reaction sn-glycerol 3-phosphate + NADP(+) = dihydroxyacetone phosphate + NADPH + H(+). Its pathway is membrane lipid metabolism; glycerophospholipid metabolism. Its function is as follows. Catalyzes the reduction of the glycolytic intermediate dihydroxyacetone phosphate (DHAP) to sn-glycerol 3-phosphate (G3P), the key precursor for phospholipid synthesis. In Burkholderia lata (strain ATCC 17760 / DSM 23089 / LMG 22485 / NCIMB 9086 / R18194 / 383), this protein is Glycerol-3-phosphate dehydrogenase [NAD(P)+].